The chain runs to 339 residues: MWSDLLQQLLDRQALTQEQAAQLMQGWLAEEIPDALSGAILTALQLKGLTVEELTGMANVLLAQSAGAPLNLAEPLIDTCGTGGDRAGTFNISTAVAFVVAAAGVKVAKHGNRSVSSRVGSADVLETLGVNLAHSDPAFLLKEVGITFLFAPGWHPAMKAVAPLRRTLKTRTVFNLLGPLVNPLYPTGQVIGIFSDRYLEAVAGTLQRLGRQRGIVLYGREGVDEATLGNMTDLVMFSGPEESLRQEVLDPQALGLASAPLRDLAGGDLQTNAAILTHVLQGKGTSAQQNVVALNAALALYVAAAVENWWEGVDRAKAILASGAAWDKLQALVTLSNES.

5-phospho-alpha-D-ribose 1-diphosphate-binding positions include Gly81, 84–85 (GD), Thr89, 91–94 (NIST), 109–117 (KHGNRSVSS), and Ser121. Anthranilate is bound at residue Gly81. Mg(2+) is bound at residue Ser93. Asn112 serves as a coordination point for anthranilate. Position 165 (Arg165) interacts with anthranilate. Mg(2+) is bound by residues Asp224 and Glu225.

The protein belongs to the anthranilate phosphoribosyltransferase family. Homodimer. It depends on Mg(2+) as a cofactor.

It carries out the reaction N-(5-phospho-beta-D-ribosyl)anthranilate + diphosphate = 5-phospho-alpha-D-ribose 1-diphosphate + anthranilate. The protein operates within amino-acid biosynthesis; L-tryptophan biosynthesis; L-tryptophan from chorismate: step 2/5. Functionally, catalyzes the transfer of the phosphoribosyl group of 5-phosphorylribose-1-pyrophosphate (PRPP) to anthranilate to yield N-(5'-phosphoribosyl)-anthranilate (PRA). The chain is Anthranilate phosphoribosyltransferase from Thermosynechococcus vestitus (strain NIES-2133 / IAM M-273 / BP-1).